A 189-amino-acid chain; its full sequence is UPF0398 protein LVIS_0849 (189 aa).

Belongs to the UPF0398 family.

The polypeptide is UPF0398 protein LVIS_0849 (Levilactobacillus brevis (strain ATCC 367 / BCRC 12310 / CIP 105137 / JCM 1170 / LMG 11437 / NCIMB 947 / NCTC 947) (Lactobacillus brevis)).